The following is a 461-amino-acid chain: L-seryl-tRNA(Sec) selenium transferase (461 aa).

At K294 the chain carries N6-(pyridoxal phosphate)lysine.

Belongs to the SelA family. Pyridoxal 5'-phosphate is required as a cofactor.

It localises to the cytoplasm. It carries out the reaction L-seryl-tRNA(Sec) + selenophosphate + H(+) = L-selenocysteinyl-tRNA(Sec) + phosphate. It participates in aminoacyl-tRNA biosynthesis; selenocysteinyl-tRNA(Sec) biosynthesis; selenocysteinyl-tRNA(Sec) from L-seryl-tRNA(Sec) (bacterial route): step 1/1. Functionally, converts seryl-tRNA(Sec) to selenocysteinyl-tRNA(Sec) required for selenoprotein biosynthesis. This is L-seryl-tRNA(Sec) selenium transferase from Actinobacillus pleuropneumoniae serotype 5b (strain L20).